Here is a 56-residue protein sequence, read N- to C-terminus: UPF0391 membrane protein Bd1438 (56 aa).

2 helical membrane-spanning segments follow: residues 4 to 24 and 33 to 53; these read AAIA…SGVA and ILLF…LVSG.

The protein belongs to the UPF0391 family.

The protein localises to the cell membrane. This is UPF0391 membrane protein Bd1438 from Bdellovibrio bacteriovorus (strain ATCC 15356 / DSM 50701 / NCIMB 9529 / HD100).